The following is a 325-amino-acid chain: DNA-directed RNA polymerase subunit alpha (325 aa).

The tract at residues 1-231 (MQTSLLKPKI…DQLSVFAALE (231 aa)) is alpha N-terminal domain (alpha-NTD). The alpha C-terminal domain (alpha-CTD) stretch occupies residues 246 to 325 (IDPILLRPVD…ENWPPAGLDK (80 aa)).

The protein belongs to the RNA polymerase alpha chain family. Homodimer. The RNAP catalytic core consists of 2 alpha, 1 beta, 1 beta' and 1 omega subunit. When a sigma factor is associated with the core the holoenzyme is formed, which can initiate transcription.

The enzyme catalyses RNA(n) + a ribonucleoside 5'-triphosphate = RNA(n+1) + diphosphate. Functionally, DNA-dependent RNA polymerase catalyzes the transcription of DNA into RNA using the four ribonucleoside triphosphates as substrates. The polypeptide is DNA-directed RNA polymerase subunit alpha (Burkholderia mallei (strain NCTC 10247)).